A 645-amino-acid chain; its full sequence is Rab11 family-interacting protein 5 (645 aa).

Positions 1–146 (MALVRDPEPA…AGRAQHTQWY (146 aa)) constitute a C2 domain. Phosphoserine occurs at positions 176, 283, 286, 307, 357, and 367. The tract at residues 271–299 (GAELLTRSPSHSSWLSTEGGRDSIQSPKL) is disordered. The segment covering 277–286 (RSPSHSSWLS) has biased composition (polar residues). The tract at residues 341 to 550 (SHVYNEEPQP…STALSSGLER (210 aa)) is disordered. Low complexity predominate over residues 357–374 (SISGPFPPSSSLHSVPPR). Basic and acidic residues predominate over residues 375 to 387 (SSEEGSRSSDDSW). A phosphoserine mark is found at serine 391 and serine 395. The segment covering 452–463 (RMGLFHHHHHQG) has biased composition (basic residues). A phosphoserine mark is found at serine 486, serine 530, serine 539, serine 545, and serine 640. In terms of domain architecture, FIP-RBD spans 578 to 640 (KDSAVLDQSA…ETSPTLLQIS (63 aa)).

In terms of assembly, interacts with RAB11FIP4. Interacts with NAPG. Interacts with RO60. Interacts with RAB11A that has been activated by GTP binding. Post-translationally, phosphorylated on serine and threonine residues. Phosphorylation at Ser-357 is PKA-dependent.

The protein resides in the cytoplasm. Its subcellular location is the recycling endosome membrane. It localises to the early endosome membrane. It is found in the golgi apparatus membrane. The protein localises to the cytoplasmic vesicle. The protein resides in the secretory vesicle membrane. Its subcellular location is the mitochondrion membrane. Its function is as follows. Rab effector involved in protein trafficking from apical recycling endosomes to the apical plasma membrane. Involved in insulin granule exocytosis. May regulate V-ATPase intracellular transport in response to extracellular acidosis. This is Rab11 family-interacting protein 5 from Mus musculus (Mouse).